The primary structure comprises 1772 residues: Gag-Pro-Pol polyprotein (1772 aa).

Glycine 2 carries the N-myristoyl glycine; by host lipid modification. A propeptide spanning residues 101 to 162 (AAVAQTEEIL…TKKPKRFPVL (62 aa)) is cleaved from the precursor. Residues 113–126 (SSHTELTTKPSQNP) are compositionally biased toward polar residues. The tract at residues 113-149 (SSHTELTTKPSQNPDLDLISLDSDDEGAKGSSLKDKN) is disordered. Basic and acidic residues predominate over residues 138–149 (EGAKGSSLKDKN). Positions 203–206 (PPPY) match the PPXY motif motif. The PTAP/PSAP motif motif lies at 211 to 214 (PSAP). Positions 217–258 (MAVVNPKEELKEKIAQLEEQIKLEELHQALISKLQKLKTGNE) form a coiled coil. The segment at 258–282 (ETVTSPETAGGFSRTPHWPGQHIPK) is disordered. Residues 548-565 (GCCFKCGRKGHFAKNCHE) form a CCHC-type zinc finger. Residues 593–626 (KSKTDSQGNPLPPHQGNRTEGPAPGPETSLWGGQ) are disordered. One can recognise a Peptidase A2 domain in the interval 781-857 (FTGLIDTGAD…LPVNLWGRDL (77 aa)). Aspartate 786 functions as the Protease; shared with dimeric partner in the catalytic mechanism. The region spanning 868–914 (PSDIVTAQMLAQGYSPGKGLGKNENGILHPIPNQGQFDKKGFGNFLT) is the G-patch domain. The Reverse transcriptase domain occupies 960–1148 (LEAGHITESN…DPYTYLGFEL (189 aa)). Mg(2+)-binding residues include aspartate 1025, aspartate 1100, aspartate 1101, aspartate 1371, glutamate 1400, aspartate 1421, and aspartate 1485. One can recognise an RNase H type-1 domain in the interval 1362–1493 (LNNALLVFTD…ADLATKTVAS (132 aa)). The segment at 1497-1538 (TNLESAQNAHTLHHLNAQTLKLMFNIPREQARQIVRQCPICA) adopts an Integrase-type zinc-finger fold. Positions 1506, 1510, 1534, and 1537 each coordinate Zn(2+). The Integrase catalytic domain occupies 1551–1720 (RGLLPNMIWQ…NPRKQFAMVK (170 aa)). Mg(2+) is bound by residues aspartate 1562, aspartate 1619, and glutamate 1655. Residues 1717–1766 (AMVKWKDPLDNTWPWPDPVIIWGRGSVCVYSQTHDAARWLPERLVKQIPN) constitute a DNA-binding region (integrase-type).

It belongs to the retroviral Pol polyprotein family. As to quaternary structure, homodimer. In terms of assembly, interacts with the G-patch peptide. Interacts with the reverse transcriptase/ribonuclease H. As to quaternary structure, homotrimer. The cofactor is Mg(2+). Released by autocatalytic processing. The protease can undergo further autoprocessing to yield 2 shorter but enzymatically active forms of 12 kDa and 13 kDa. Post-translationally, myristoylated. Myristoylation of the matrix (MA) domain mediates the transport and binding of Gag polyproteins to the host plasma membrane and is required for the assembly of viral particles. In terms of processing, specific enzymatic cleavages in vivo yield mature proteins.

The protein localises to the virion. It catalyses the reaction DNA(n) + a 2'-deoxyribonucleoside 5'-triphosphate = DNA(n+1) + diphosphate. The enzyme catalyses Endonucleolytic cleavage to 5'-phosphomonoester.. It carries out the reaction dUTP + H2O = dUMP + diphosphate + H(+). Matrix protein. In terms of biological role, nucleocapsid protein p14: Nucleocapsid protein. Functionally, capsid protein. Its function is as follows. The aspartyl protease mediates proteolytic cleavages of Gag and Gag-Pol polyproteins during or shortly after the release of the virion from the plasma membrane. Cleavages take place as an ordered, step-wise cascade to yield mature proteins. This process is called maturation. Displays maximal activity during the budding process just prior to particle release from the cell. Enhances the activity of the reverse transcriptase. May be part of the mature RT. In terms of biological role, RT is a multifunctional enzyme that converts the viral dimeric RNA genome into dsDNA in the cytoplasm, shortly after virus entry into the cell. This enzyme displays a DNA polymerase activity that can copy either DNA or RNA templates, and a ribonuclease H (RNase H) activity that cleaves the RNA strand of RNA-DNA heteroduplexes in a partially processive 3' to 5' endonucleasic mode. Conversion of viral genomic RNA into dsDNA requires many steps. A tRNA binds to the primer-binding site (PBS) situated at the 5' end of the viral RNA. RT uses the 3' end of the tRNA primer to perfom a short round of RNA-dependent minus-strand DNA synthesis. The reading proceeds through the U5 region and ends after the repeated (R) region which is present at both ends of viral RNA. The portion of the RNA-DNA heteroduplex is digested by the RNase H, resulting in a ssDNA product attached to the tRNA primer. This ssDNA/tRNA hybridizes with the identical R region situated at the 3' end of viral RNA. This template exchange, known as minus-strand DNA strong stop transfer, can be either intra- or intermolecular. RT uses the 3' end of this newly synthesized short ssDNA to perfom the RNA-dependent minus-strand DNA synthesis of the whole template. RNase H digests the RNA template except for a polypurine tract (PPT) situated at the 5' end of the genome. It is not clear if both polymerase and RNase H activities are simultaneous. RNase H probably can proceed both in a polymerase-dependent (RNA cut into small fragments by the same RT performing DNA synthesis) and a polymerase-independent mode (cleavage of remaining RNA fragments by free RTs). Secondly, RT performs DNA-directed plus-strand DNA synthesis using the PPT that has not been removed by RNase H as primers. PPT and tRNA primers are then removed by RNase H. The 3' and 5' ssDNA PBS regions hybridize to form a circular dsDNA intermediate. Strand displacement synthesis by RT to the PBS and PPT ends produces a blunt ended, linear dsDNA copy of the viral genome that includes long terminal repeats (LTRs) at both ends. Functionally, catalyzes viral DNA integration into the host chromosome, by performing a series of DNA cutting and joining reactions. This Macaca mulatta (Rhesus macaque) protein is Gag-Pro-Pol polyprotein (pol).